The primary structure comprises 270 residues: UPF0162 protein VC_2176 (270 aa).

Belongs to the UPF0162 family.

The chain is UPF0162 protein VC_2176 from Vibrio cholerae serotype O1 (strain ATCC 39315 / El Tor Inaba N16961).